Here is a 754-residue protein sequence, read N- to C-terminus: Phosphoribosylformylglycinamidine synthase subunit PurL (754 aa).

The disordered stretch occupies residues 1–21; that stretch reads MLDTVEHAATTPDQPQPYGEL. His54 is an active-site residue. ATP is bound by residues Tyr57 and Lys101. A Mg(2+)-binding site is contributed by Glu103. Substrate-binding positions include 104-107 and Arg126; that span reads SHNH. His105 functions as the Proton acceptor in the catalytic mechanism. Asp127 contacts Mg(2+). Gln252 lines the substrate pocket. Asp280 is a Mg(2+) binding site. 324-326 lines the substrate pocket; that stretch reads ESQ. Asn512 and Gly549 together coordinate ATP. Asn550 contacts Mg(2+). Position 552 (Ser552) interacts with substrate.

It belongs to the FGAMS family. In terms of assembly, monomer. Part of the FGAM synthase complex composed of 1 PurL, 1 PurQ and 2 PurS subunits.

It is found in the cytoplasm. The catalysed reaction is N(2)-formyl-N(1)-(5-phospho-beta-D-ribosyl)glycinamide + L-glutamine + ATP + H2O = 2-formamido-N(1)-(5-O-phospho-beta-D-ribosyl)acetamidine + L-glutamate + ADP + phosphate + H(+). It participates in purine metabolism; IMP biosynthesis via de novo pathway; 5-amino-1-(5-phospho-D-ribosyl)imidazole from N(2)-formyl-N(1)-(5-phospho-D-ribosyl)glycinamide: step 1/2. Functionally, part of the phosphoribosylformylglycinamidine synthase complex involved in the purines biosynthetic pathway. Catalyzes the ATP-dependent conversion of formylglycinamide ribonucleotide (FGAR) and glutamine to yield formylglycinamidine ribonucleotide (FGAM) and glutamate. The FGAM synthase complex is composed of three subunits. PurQ produces an ammonia molecule by converting glutamine to glutamate. PurL transfers the ammonia molecule to FGAR to form FGAM in an ATP-dependent manner. PurS interacts with PurQ and PurL and is thought to assist in the transfer of the ammonia molecule from PurQ to PurL. This chain is Phosphoribosylformylglycinamidine synthase subunit PurL, found in Mycobacterium bovis (strain ATCC BAA-935 / AF2122/97).